The primary structure comprises 142 residues: Hemoglobin subunit alpha-4 (142 aa).

S1 carries the post-translational modification N-acetylserine. Residues 1 to 142 (SLSAKDKANV…LALALAEKYR (142 aa)) form the Globin domain. H59 lines the O2 pocket. H88 lines the heme b pocket.

The protein belongs to the globin family. In terms of assembly, heterotetramer of two alpha chains and two beta chains. Red blood cells.

In terms of biological role, involved in oxygen transport from gills to the various peripheral tissues. The chain is Hemoglobin subunit alpha-4 (hba4) from Oncorhynchus mykiss (Rainbow trout).